We begin with the raw amino-acid sequence, 333 residues long: Transcription factor MYB36 (333 aa).

2 HTH myb-type domains span residues 9–62 (KANV…LNYL) and 63–117 (RPNI…KKKL). DNA-binding regions (H-T-H motif) lie at residues 38–62 (WIALPQKIGLKRCGKSCRLRWLNYL) and 90–113 (WSIIAAQLPGRTDNDIKNYWNTKL). The disordered stretch occupies residues 119 to 150 (GRQKQMNRQDSITDSTENNLSNNNNNKSPQNL). Positions 122–135 (KQMNRQDSITDSTE) are enriched in polar residues. Low complexity predominate over residues 136–150 (NNLSNNNNNKSPQNL).

As to expression, expressed in leaves, roots (endodermis-specific) and seedlings.

The protein localises to the nucleus. Its function is as follows. Transcription factors that activates genes required for endodermal differentiation but represses genes involved in proliferative divisions, thus regulating the transition from proliferation to differentiation in root endodermis. Required for Casparian strip formation by positively regulating the expression of the Casparian strip genes CASP1, PER64 and ESB1 and other endodermis-specific genes, thus triggering correct localized lignin biosynthesis in root endodermis and subsequently regulating global ion homeostasis. This Arabidopsis thaliana (Mouse-ear cress) protein is Transcription factor MYB36.